A 244-amino-acid chain; its full sequence is Putative quercetin 2,3-dioxygenase Mb0187c (244 aa).

A divalent metal cation is bound by residues His-60, His-62, His-104, and Glu-106.

The protein belongs to the pirin family. Requires a divalent metal cation as cofactor.

The catalysed reaction is quercetin + O2 = 2-(3,4-dihydroxybenzoyloxy)-4,6-dihydroxybenzoate + CO. Its pathway is flavonoid metabolism; quercetin degradation. In terms of biological role, putative quercetin 2,3-dioxygenase. The polypeptide is Putative quercetin 2,3-dioxygenase Mb0187c (Mycobacterium bovis (strain ATCC BAA-935 / AF2122/97)).